Reading from the N-terminus, the 148-residue chain is Macrodomain Ter protein (148 aa).

Belongs to the MatP family. In terms of assembly, homodimer.

The protein resides in the cytoplasm. In terms of biological role, required for spatial organization of the terminus region of the chromosome (Ter macrodomain) during the cell cycle. Prevents early segregation of duplicated Ter macrodomains during cell division. Binds specifically to matS, which is a 13 bp signature motif repeated within the Ter macrodomain. The polypeptide is Macrodomain Ter protein (Haemophilus ducreyi (strain 35000HP / ATCC 700724)).